We begin with the raw amino-acid sequence, 320 residues long: Zygote arrest protein 1 (320 aa).

2 disordered regions span residues 106–130 (ELRR…EVRY) and 155–208 (DRPA…AEGS). The 3CxxC-type zinc-finger motif lies at 222–305 (KYGYYHCREC…RQDLCGRCKG (84 aa)).

It belongs to the ZAR1 family.

It localises to the cytoplasm. It is found in the cytoplasmic ribonucleoprotein granule. Functionally, mRNA-binding protein required for maternal mRNA storage, translation and degradation during oocyte maturation. Probably promotes formation of some phase-separated membraneless compartment that stores maternal mRNAs in oocytes: acts by undergoing liquid-liquid phase separation upon binding to maternal mRNAs. Binds to the 3'-UTR of maternal mRNAs, inhibiting their translation. In Takifugu rubripes (Japanese pufferfish), this protein is Zygote arrest protein 1.